We begin with the raw amino-acid sequence, 268 residues long: Chymotrypsin-C (268 aa).

Residues 1 to 16 (MLGITVLAAILACASS) form the signal peptide. The propeptide at 17–29 (CGDPTFPPNLSAR) is activation peptide. 5 cysteine pairs are disulfide-bonded: Cys17–Cys141, Cys59–Cys75, Cys155–Cys222, Cys186–Cys202, and Cys212–Cys243. Asn25 is a glycosylation site (N-linked (GlcNAc...) asparagine). Residues 30 to 267 (VVGGEDAVPN…YIDWIKEKIQ (238 aa)) enclose the Peptidase S1 domain. Residue His74 is the Charge relay system of the active site. 2 N-linked (GlcNAc...) asparagine glycosylation sites follow: Asn79 and Asn90. Catalysis depends on Asp121, which acts as the Charge relay system. N-linked (GlcNAc...) asparagine glycosylation is present at Asn182. Ser216 (charge relay system) is an active-site residue.

The protein belongs to the peptidase S1 family. Elastase subfamily.

The catalysed reaction is Preferential cleavage: Leu-|-Xaa, Tyr-|-Xaa, Phe-|-Xaa, Met-|-Xaa, Trp-|-Xaa, Gln-|-Xaa, Asn-|-Xaa.. Its function is as follows. Regulates activation and degradation of trypsinogens and procarboxypeptidases by targeting specific cleavage sites within their zymogen precursors. Has chymotrypsin-type protease activity and hypocalcemic activity. Cleaves TRY4 and TRY5 and thereby inhibits their autoactivation. The polypeptide is Chymotrypsin-C (Ctrc) (Mus musculus (Mouse)).